Reading from the N-terminus, the 105-residue chain is Small ribosomal subunit protein uS10 (105 aa).

This sequence belongs to the universal ribosomal protein uS10 family. In terms of assembly, part of the 30S ribosomal subunit.

Its function is as follows. Involved in the binding of tRNA to the ribosomes. This Rickettsia conorii (strain ATCC VR-613 / Malish 7) protein is Small ribosomal subunit protein uS10.